The primary structure comprises 564 residues: E3 ubiquitin-protein ligase TRIM16 (564 aa).

Residues 1–70 (MAELDLMAPG…DPAEQGDPAG (70 aa)) are disordered. Low complexity predominate over residues 24-39 (SPDSGSPSPDSGSASP). B box-type zinc fingers lie at residues 72–122 (GKEV…LTEP) and 126–165 (HNWRYCPAHHSPLSAFCCPDQQCICQDCCQEHSGHTIVSL). Serine 116 carries the post-translational modification Phosphoserine. Positions 131, 134, 153, and 157 each coordinate Zn(2+). Coiled-coil stretches lie at residues 165–203 (LDAARRDKEAELQCTQLDLERKLKLNENAISRLQANQKS), 243–274 (AALSQANGIKAHLEYRSAEMEKSKQELERMAA), and 320–340 (HLIQLLENYKKKLQEFSKEEE). Serine 203 is subject to Phosphoserine. Residues 355–553 (YWTSKPEPST…RIVDLGEEPE (199 aa)) enclose the B30.2/SPRY domain.

The protein belongs to the TRIM/RBCC family. As to quaternary structure, homodimerizes via its coiled-coil domain. Heterodimerizes with MID1, TRIM24 and PML. Interacts with Galectin-3/LGALS3 in a ULK1-dependent manner; this interaction mediates autophagy of damage endomembranes. Interacts with BECN1. Interacts with ATG16L1. Interacts with p62/SQSTM and LC3B/MAP1LC3B. Post-translationally, phosphorylated by ULK1. In terms of processing, auto-ubiquitinates via its B-Boxes.

The protein localises to the cytoplasm. The catalysed reaction is S-ubiquitinyl-[E2 ubiquitin-conjugating enzyme]-L-cysteine + [acceptor protein]-L-lysine = [E2 ubiquitin-conjugating enzyme]-L-cysteine + N(6)-ubiquitinyl-[acceptor protein]-L-lysine.. E3 ubiquitin ligase that plays an essential role in the organization of autophagic response and ubiquitination upon lysosomal and phagosomal damages. Plays a role in the stress-induced biogenesis and degradation of protein aggresomes by regulating the p62-KEAP1-NRF2 signaling and particularly by modulating the ubiquitination levels and thus stability of NRF2. Acts as a scaffold protein and facilitates autophagic degradation of protein aggregates by interacting with p62/SQSTM, ATG16L1 and LC3B/MAP1LC3B. In turn, protects the cell against oxidative stress-induced cell death as a consequence of endomembrane damage. This is E3 ubiquitin-protein ligase TRIM16 (TRIM16) from Pongo abelii (Sumatran orangutan).